The primary structure comprises 97 residues: Exodeoxyribonuclease 7 small subunit (97 aa).

Residues 1 to 22 (MAKTASPGDTAAGNGTEPLPDK) form a disordered region.

The protein belongs to the XseB family. As to quaternary structure, heterooligomer composed of large and small subunits.

Its subcellular location is the cytoplasm. The catalysed reaction is Exonucleolytic cleavage in either 5'- to 3'- or 3'- to 5'-direction to yield nucleoside 5'-phosphates.. Bidirectionally degrades single-stranded DNA into large acid-insoluble oligonucleotides, which are then degraded further into small acid-soluble oligonucleotides. This chain is Exodeoxyribonuclease 7 small subunit, found in Burkholderia vietnamiensis (strain G4 / LMG 22486) (Burkholderia cepacia (strain R1808)).